A 92-amino-acid polypeptide reads, in one-letter code: Large ribosomal subunit protein bL25 (92 aa).

The protein belongs to the bacterial ribosomal protein bL25 family. As to quaternary structure, part of the 50S ribosomal subunit; part of the 5S rRNA/L5/L18/L25 subcomplex. Contacts the 5S rRNA. Binds to the 5S rRNA independently of L5 and L18.

Functionally, this is one of the proteins that binds to the 5S RNA in the ribosome where it forms part of the central protuberance. The protein is Large ribosomal subunit protein bL25 of Photobacterium profundum (strain SS9).